The chain runs to 513 residues: MDEESLQTALRTYDAQLQQVELALGAGLDPSELADLRQLQGDLKELIELTEASLVSIRKSKLLAALDGERPVQEDAEPLAFQNAIVETAEVPVAPGAELETVPSRETGPGPTEPGQEEDDGEDEEGGAALSGRKVNAPYYSAWGTLEYHNAMVVGTEEADDGSPGVRVLYLYPTHKSLKPCPFFLEGKCRFQENCRFSHGQVVSVDELRPFQDPDLSSLQAGSACLAKRQDGLWYPARITDVDSGYYTVKFDSLLLKEAVVEGDSILPPLRTDPAGSSDSDGSDADDPSYARVVEPGAANPGTCSSAFAGWEVHTRGIGSRLLAKMGYEFGKGLGRRADGRVEPVHAVVLPRGKSLDQCAEILQKRTRAGQAGVSKPPKCRSRGSGPGGRPPPRSVFDFLNEKLKGGAPGAPEVGAAPPGRSGKEVYHASRSTKRALSLRLLQTEEKIEQTQRAIRGIQEALARNAGRHSVTTTQLQEKLAGAQRQLGQLRAQEAGLQREQRKADTHKKMTEF.

Met-1 is modified (N-acetylmethionine). The disordered stretch occupies residues 92 to 131 (PVAPGAELETVPSRETGPGPTEPGQEEDDGEDEEGGAALS). The segment covering 115–126 (GQEEDDGEDEEG) has biased composition (acidic residues). Residues 176 to 202 (KSLKPCPFFLEGKCRFQENCRFSHGQV) form a C3H1-type zinc finger. The disordered stretch occupies residues 267 to 298 (LPPLRTDPAGSSDSDGSDADDPSYARVVEPGA). Phosphoserine occurs at positions 278 and 355. In terms of domain architecture, G-patch spans 315 to 361 (TRGIGSRLLAKMGYEFGKGLGRRADGRVEPVHAVVLPRGKSLDQCAE). 2 disordered regions span residues 367–394 (TRAG…PPPR) and 493–513 (QEAG…MTEF). Basic and acidic residues predominate over residues 497–513 (LQREQRKADTHKKMTEF).

In terms of assembly, interacts with CHD4/Mi-2; the interaction is direct.

Its subcellular location is the nucleus. Functionally, transcription repressor that specifically binds the 5'-GGAG[GA]A[GA]A-3' consensus sequence. Represses transcription by recruiting the chromatin multiprotein complex NuRD to target promoters. Negatively regulates expression of EGFR, a gene involved in cell proliferation, survival and migration. Its ability to repress genes of the EGFR pathway suggest it may act as a tumor suppressor. This Ovis aries (Sheep) protein is Zinc finger CCCH-type with G patch domain-containing protein (ZGPAT).